A 479-amino-acid chain; its full sequence is MNIVENEICIRTLIDDDFPLMLKWLTDERVLEFYGGRDKKYTLESLKKHYTEPWEDEVFRVIIEYNNVPIGYGQIYKMYDELYTDYHYPKTDEIVYGMDQFIGEPNYWSKGIGTRYIKLIFEFLKKERNANAVILDPHKNNPRAIRAYQKSGFRIIEDLPEHELHEGKKEDCYLMEYRYDDNATNVKAMKYLIEHYFDNFKVDSIEIIGSGYDSVAYLVNNEYIFKTKFSTNKKKGYAKEKAIYNFLNTNLETNVKIPNIEYSYISDELSILGYKEIKGTFLTPEIYSTMSEEEQNLLKRDIASFLRQMHGLDYTDISECTIDNKQNVLEEYILLRETIYNDLTDIEKDYIESFMERLNATTVFEGKKCLCHNDFSCNHLLLDGNNRLTGIIDFGDSGIIDEYCDFIYLLEDSEEEIGTNFGEDILRMYGNIDIEKAKEYQDIVEEYYPIETIVYGIKNIKQEFIENGRKEIYKRTYKD.

One can recognise an N-acetyltransferase domain in the interval 8–180; the sequence is ICIRTLIDDD…DCYLMEYRYD (173 aa). Residues 110-153 form an acetyl-CoA binding site region; that stretch reads KGIGTRYIKLIFEFLKKERNANAVILDPHKNNPRAIRAYQKSGF. The Proton acceptor; for phosphotransferase activity role is filled by Asp374. Asp393 is an a gentamycin binding site.

The protein in the C-terminal section; belongs to the aminoglycoside phosphotransferase family.

It is found in the cytoplasm. It carries out the reaction a gentamycin + GTP = a gentamycin 2''-phosphate + GDP + H(+). Involved in resistance to gentamicin, tobramycin, and kanamycin. Tobramycin and kanamycin resistance is due to the ACC activity, specified by N-terminal region. The C-terminal region is a kinase that phosphorylates several 4,6-disubstituted aminoglycosides. The protein is Bifunctional AAC/APH (aacA-aphD) of Enterococcus faecalis (strain ATCC 700802 / V583).